Reading from the N-terminus, the 627-residue chain is 1-deoxy-D-xylulose-5-phosphate synthase (627 aa).

Residues His-75 and 116-118 (AHS) each bind thiamine diphosphate. Position 147 (Asp-147) interacts with Mg(2+). Thiamine diphosphate contacts are provided by residues 148–149 (GA), Asn-177, Tyr-284, and Glu-366. Asn-177 provides a ligand contact to Mg(2+).

Belongs to the transketolase family. DXPS subfamily. As to quaternary structure, homodimer. Mg(2+) serves as cofactor. The cofactor is thiamine diphosphate.

The catalysed reaction is D-glyceraldehyde 3-phosphate + pyruvate + H(+) = 1-deoxy-D-xylulose 5-phosphate + CO2. Its pathway is metabolic intermediate biosynthesis; 1-deoxy-D-xylulose 5-phosphate biosynthesis; 1-deoxy-D-xylulose 5-phosphate from D-glyceraldehyde 3-phosphate and pyruvate: step 1/1. Functionally, catalyzes the acyloin condensation reaction between C atoms 2 and 3 of pyruvate and glyceraldehyde 3-phosphate to yield 1-deoxy-D-xylulose-5-phosphate (DXP). The sequence is that of 1-deoxy-D-xylulose-5-phosphate synthase from Bordetella petrii (strain ATCC BAA-461 / DSM 12804 / CCUG 43448).